Reading from the N-terminus, the 314-residue chain is Protein phosphatase PTC7 homolog fig (314 aa).

The region spanning 43 to 309 (PYLVTVVQGR…DDITLILSSV (267 aa)) is the PPM-type phosphatase domain. 3 residues coordinate Mn(2+): aspartate 87, glycine 88, and aspartate 232.

It belongs to the PP2C family. Mg(2+) is required as a cofactor. Requires Mn(2+) as cofactor.

The catalysed reaction is O-phospho-L-seryl-[protein] + H2O = L-seryl-[protein] + phosphate. It catalyses the reaction O-phospho-L-threonyl-[protein] + H2O = L-threonyl-[protein] + phosphate. This chain is Protein phosphatase PTC7 homolog fig, found in Drosophila simulans (Fruit fly).